The chain runs to 230 residues: Cytochrome c oxidase subunit 2 (230 aa).

The Mitochondrial intermembrane portion of the chain corresponds to 1–14 (MAYPLQLGFQDATS). The helical transmembrane segment at 15 to 45 (PIMEELLHFHDHTLMIVFLISSLVLYIISTM) threads the bilayer. Residues 46 to 59 (LTTKLTHTNTMDAQ) lie on the Mitochondrial matrix side of the membrane. Residues 60 to 87 (EVETIWTILPAIILILIALPSLRILYMM) traverse the membrane as a helical segment. The Mitochondrial intermembrane segment spans residues 88–230 (DEINNPNLTI…NWTSSMMSTS (143 aa)). The Cu cation site is built by histidine 161, cysteine 196, glutamate 198, cysteine 200, histidine 204, and methionine 207. Glutamate 198 is a binding site for Mg(2+). The residue at position 218 (tyrosine 218) is a Phosphotyrosine.

This sequence belongs to the cytochrome c oxidase subunit 2 family. Component of the cytochrome c oxidase (complex IV, CIV), a multisubunit enzyme composed of 14 subunits. The complex is composed of a catalytic core of 3 subunits MT-CO1, MT-CO2 and MT-CO3, encoded in the mitochondrial DNA, and 11 supernumerary subunits COX4I, COX5A, COX5B, COX6A, COX6B, COX6C, COX7A, COX7B, COX7C, COX8 and NDUFA4, which are encoded in the nuclear genome. The complex exists as a monomer or a dimer and forms supercomplexes (SCs) in the inner mitochondrial membrane with NADH-ubiquinone oxidoreductase (complex I, CI) and ubiquinol-cytochrome c oxidoreductase (cytochrome b-c1 complex, complex III, CIII), resulting in different assemblies (supercomplex SCI(1)III(2)IV(1) and megacomplex MCI(2)III(2)IV(2)). Found in a complex with TMEM177, COA6, COX18, COX20, SCO1 and SCO2. Interacts with TMEM177 in a COX20-dependent manner. Interacts with COX20. Interacts with COX16. Cu cation is required as a cofactor.

Its subcellular location is the mitochondrion inner membrane. It catalyses the reaction 4 Fe(II)-[cytochrome c] + O2 + 8 H(+)(in) = 4 Fe(III)-[cytochrome c] + 2 H2O + 4 H(+)(out). Component of the cytochrome c oxidase, the last enzyme in the mitochondrial electron transport chain which drives oxidative phosphorylation. The respiratory chain contains 3 multisubunit complexes succinate dehydrogenase (complex II, CII), ubiquinol-cytochrome c oxidoreductase (cytochrome b-c1 complex, complex III, CIII) and cytochrome c oxidase (complex IV, CIV), that cooperate to transfer electrons derived from NADH and succinate to molecular oxygen, creating an electrochemical gradient over the inner membrane that drives transmembrane transport and the ATP synthase. Cytochrome c oxidase is the component of the respiratory chain that catalyzes the reduction of oxygen to water. Electrons originating from reduced cytochrome c in the intermembrane space (IMS) are transferred via the dinuclear copper A center (CU(A)) of subunit 2 and heme A of subunit 1 to the active site in subunit 1, a binuclear center (BNC) formed by heme A3 and copper B (CU(B)). The BNC reduces molecular oxygen to 2 water molecules using 4 electrons from cytochrome c in the IMS and 4 protons from the mitochondrial matrix. The protein is Cytochrome c oxidase subunit 2 (MT-CO2) of Ornithorhynchus anatinus (Duckbill platypus).